The following is a 165-amino-acid chain: Shikimate kinase (165 aa).

11 to 16 (GAGKTT) contacts ATP. A Mg(2+)-binding site is contributed by Thr-15. Asp-33, Arg-57, and Gly-78 together coordinate substrate. Arg-116 contributes to the ATP binding site. Arg-134 contributes to the substrate binding site.

Belongs to the shikimate kinase family. Monomer. Mg(2+) is required as a cofactor.

The protein resides in the cytoplasm. It catalyses the reaction shikimate + ATP = 3-phosphoshikimate + ADP + H(+). The protein operates within metabolic intermediate biosynthesis; chorismate biosynthesis; chorismate from D-erythrose 4-phosphate and phosphoenolpyruvate: step 5/7. Catalyzes the specific phosphorylation of the 3-hydroxyl group of shikimic acid using ATP as a cosubstrate. This Bacillus cereus (strain AH187) protein is Shikimate kinase.